A 447-amino-acid polypeptide reads, in one-letter code: MSASATNGTHYEQLHQGRTKMYKSKVDVVLGAQWGDEGKGKVVDMLASDVDIVCRCQGGNNAGHTVVANGTEFDFHLLPSGVVNEKCVSVIGNGVVIHLPSLFDEVLKNEAKGLQHLENRLIISDRAHLVFDFHQHVDGMQEAEKGGKSLGTTKKGIGPAYSSKATRNGIRVGELLGDFNLFSEKFKSIVATHVRLFPSINVDVEAELARYKDYADKVRPYVKDTICFLHTALRNGKTILVEGANAAMLDIDFGTYPYVTSSNCSIGGVLTGLGLPPQTIGEVIGVVKAYTTRVGDGPFPTEQLNDIGDLLQTRGFEIGVTTKRKRRCGWLDIPLLKYTSLVNGYTCICLTKLDILDTLPEIKVAVAYKKPNGEKLDHFPGTIAELGNIEVEYAVLPGWQTSTEEVRNFKELPENAQSYVRFLESELSVPVRWVGVGKGRESIINVH.

GTP is bound by residues 35-41 (GDEGKGK) and 63-65 (GHT). The active-site Proton acceptor is Asp36. Mg(2+) is bound by residues Asp36 and Gly63. Residues 36–39 (DEGK), 61–64 (NAGH), Thr153, Arg167, Asn245, Thr260, and Arg324 each bind IMP. Catalysis depends on His64, which acts as the Proton donor. 320 to 326 (VTTKRKR) is a substrate binding site. Residues Arg326, 352–354 (KLD), and 435–437 (GVG) each bind GTP.

The protein belongs to the adenylosuccinate synthetase family. Homodimer. It depends on Mg(2+) as a cofactor.

The protein localises to the cytoplasm. The catalysed reaction is IMP + L-aspartate + GTP = N(6)-(1,2-dicarboxyethyl)-AMP + GDP + phosphate + 2 H(+). It participates in purine metabolism; AMP biosynthesis via de novo pathway; AMP from IMP: step 1/2. In terms of biological role, plays an important role in the de novo pathway and in the salvage pathway of purine nucleotide biosynthesis. Catalyzes the first committed step in the biosynthesis of AMP from IMP. The polypeptide is Adenylosuccinate synthetase (Drosophila sechellia (Fruit fly)).